We begin with the raw amino-acid sequence, 377 residues long: Anhydro-N-acetylmuramic acid kinase (377 aa).

19–26 lines the ATP pocket; sequence GTSLDGVD.

This sequence belongs to the anhydro-N-acetylmuramic acid kinase family.

The catalysed reaction is 1,6-anhydro-N-acetyl-beta-muramate + ATP + H2O = N-acetyl-D-muramate 6-phosphate + ADP + H(+). Its pathway is amino-sugar metabolism; 1,6-anhydro-N-acetylmuramate degradation. It participates in cell wall biogenesis; peptidoglycan recycling. Functionally, catalyzes the specific phosphorylation of 1,6-anhydro-N-acetylmuramic acid (anhMurNAc) with the simultaneous cleavage of the 1,6-anhydro ring, generating MurNAc-6-P. Is required for the utilization of anhMurNAc either imported from the medium or derived from its own cell wall murein, and thus plays a role in cell wall recycling. This chain is Anhydro-N-acetylmuramic acid kinase, found in Roseobacter denitrificans (strain ATCC 33942 / OCh 114) (Erythrobacter sp. (strain OCh 114)).